The sequence spans 355 residues: Probable nitronate monooxygenase (355 aa).

Residues asparagine 71, glutamine 175, glycine 180, glycine 218, and 237 to 240 contribute to the FMN site; that span reads QMGT.

It belongs to the nitronate monooxygenase family. NMO class I subfamily. It depends on FMN as a cofactor.

It catalyses the reaction 3 propionate 3-nitronate + 3 O2 + H2O = 3 3-oxopropanoate + 2 nitrate + nitrite + H2O2 + 3 H(+). Functionally, nitronate monooxygenase that uses molecular oxygen to catalyze the oxidative denitrification of alkyl nitronates. Acts on propionate 3-nitronate (P3N), the presumed physiological substrate. Probably functions in the detoxification of P3N, a metabolic poison produced by plants and fungi as a defense mechanism. This chain is Probable nitronate monooxygenase, found in Staphylococcus aureus (strain USA300).